Reading from the N-terminus, the 295-residue chain is 33 kDa chaperonin (295 aa).

2 cysteine pairs are disulfide-bonded: Cys233/Cys235 and Cys267/Cys270.

Belongs to the HSP33 family. In terms of processing, under oxidizing conditions two disulfide bonds are formed involving the reactive cysteines. Under reducing conditions zinc is bound to the reactive cysteines and the protein is inactive.

It localises to the cytoplasm. Redox regulated molecular chaperone. Protects both thermally unfolding and oxidatively damaged proteins from irreversible aggregation. Plays an important role in the bacterial defense system toward oxidative stress. This chain is 33 kDa chaperonin, found in Mannheimia succiniciproducens (strain KCTC 0769BP / MBEL55E).